We begin with the raw amino-acid sequence, 530 residues long: White collar 2 protein (530 aa).

Repeat copies occupy residues Gly9–Met12, Gly21–Met24, Gly25–Met28, Gly29–Met32, Gly33–Met36, Gly37–Met40, and Gly41–Met44. The tract at residues Gly9–Met44 is 7 X 4 AA repeats of G-[SAT]-G-M. The interval Ile134–Glu158 is disordered. Gly residues predominate over residues Pro144 to Ser154. A PAS domain is found at Arg162–Gly232. The tract at residues Arg315 to Asp343 is disordered. The GATA-type zinc-finger motif lies at Cys468–Cys493. The interval Lys504 to Gly530 is disordered.

In terms of assembly, heterodimer of wc-1 and wc-2 (Potential). Binds to DNA.

The protein resides in the nucleus. Functionally, may function as a transcription factor involved in light regulation. Binds and affects blue light regulation of the al-3 gene. Wc-1 and wc-2 interact via homologous PAS domains, bind to promoters of light regulated genes such as frq, and activate transcription. May bind directly to frq. The sequence is that of White collar 2 protein (wc-2) from Neurospora crassa (strain ATCC 24698 / 74-OR23-1A / CBS 708.71 / DSM 1257 / FGSC 987).